Here is a 788-residue protein sequence, read N- to C-terminus: Probable phosphoketolase 1 (788 aa).

Belongs to the XFP family. It depends on thiamine diphosphate as a cofactor.

This Lactiplantibacillus plantarum (strain ATCC BAA-793 / NCIMB 8826 / WCFS1) (Lactobacillus plantarum) protein is Probable phosphoketolase 1.